The primary structure comprises 704 residues: Probable ferric reduction oxidase 1 (704 aa).

Over 1 to 16 (MGVGEMNKEVIDKVIK) the chain is Cytoplasmic. Residues 17 to 36 (FLMMVILMGTIVIWIMMPTS) traverse the membrane as a helical segment. The Lumenal portion of the chain corresponds to 37–62 (TYKEIWLTSMRAKLGKSIYYGRPGVN). A helical membrane pass occupies residues 63-81 (LLVYMFPMILLAFLGCIYL). The Cytoplasmic segment spans residues 82–115 (HLKKSTTVNQFNSGVEKKRAKFGALRRPMLVNGP). Residues 116-139 (LGIVTVTEVMFLTMFMALLLWSLA) traverse the membrane as a helical segment. Topologically, residues 140-207 (NYMYRTFVNV…VGLTSESSIK (68 aa)) are lumenal. The region spanning 174-294 (GIVGNICLAF…YLYIVFMLFF (121 aa)) is the Ferric oxidoreductase domain. Residues 208–231 (YHIWLGHLVMIIFTSHGLCYFIYW) traverse the membrane as a helical segment. Heme-binding residues include H209 and H223. Residues 232 to 282 (ISKNQLVSKMLEWDRTAVSNLAGEIALVAGLMMWVTTYPKIRRRLFEVFFY) lie on the Cytoplasmic side of the membrane. Residues 283–307 (SHYLYIVFMLFFVFHVGISHALIPL) form a helical membrane-spanning segment. Residues H284 and H297 each contribute to the heme site. Over 308-329 (PGFYIFLVDRFLRFLQSRNNVK) the chain is Lumenal. The FAD-binding FR-type domain maps to 323–430 (QSRNNVKLVS…EGPYGPSSTD (108 aa)). The helical transmembrane segment at 330–350 (LVSARVLPCDTVELNFSKNPM) threads the bilayer. At 351–550 (LMYSPTSTMF…PISPILGPNS (200 aa)) the chain is on the cytoplasmic side. FAD is bound at residue 372–375 (HPFT). 422–425 (GPYG) contributes to the NAD(+) binding site. The helical transmembrane segment at 551 to 573 (WLCLAAILSSSFMIFIVIIAIIT) threads the bilayer. Topologically, residues 574–592 (RYHIHPIDQNSEKYTWAYK) are lumenal. Residues 593 to 614 (SLIYLVSISITVVTTSTAAMLW) traverse the membrane as a helical segment. Over 615–704 (NKKKYYAKND…LHFESISFSW (90 aa)) the chain is Cytoplasmic.

This sequence belongs to the ferric reductase (FRE) family. The cofactor is FAD. In terms of tissue distribution, expressed in siliques. Detected in roots.

The protein resides in the membrane. The catalysed reaction is 2 a Fe(II)-siderophore + NAD(+) + H(+) = 2 a Fe(III)-siderophore + NADH. Ferric chelate reductase involved in iron reduction in roots. May participate in the transport of electrons to a Fe(3+) ion via FAD and heme intermediates. The chain is Probable ferric reduction oxidase 1 (FRO1) from Arabidopsis thaliana (Mouse-ear cress).